We begin with the raw amino-acid sequence, 112 residues long: MDLRSALEKTNIIKSYKLHFLIRYTTSRFEVKEPFLAYLHMARQKDKLLPKCITPPNKKADPFTNDVSSYFTHTHTHTPCSPSLVYTYVNTTEKSPSKSPKHKNILPFNFTK.

A disordered region spans residues 93 to 112 (EKSPSKSPKHKNILPFNFTK).

The protein belongs to the UPF0320 family.

In Saccharomyces cerevisiae (strain ATCC 204508 / S288c) (Baker's yeast), this protein is Putative UPF0320 protein YEL074W.